We begin with the raw amino-acid sequence, 961 residues long: MDELGIPVYKRGFPEHLLRGYEFIIDVGTKIESVGGRHDVTKIPEMNAYDIKQESIRTALWYNPIRNDGFVLPRVLDITLRGYDERRAVVESTRHKSFHTNDQWVQWMMKDSMDAQPLKVGLDTQVWNVAHSLHNSVVEIDSKKADTMAYHVEPIEDASKGCLHTRTMMWNHLVRIETFHAAQEVHILFKPTYDIVVHAERRDRSQPFRPGDQTLINFGRGQKVAMNHNSYDKMVEGLTHLVIRGKTPEVIRDDIASLDEICNRWIQSRHDPGEIKAYELCKYLSTIGRKSLDREKEPEDEANLSIRFQEAIDNKFRQHDPERLKIFEHRNQRRDEDRFYILLMIAGSDTFNTRVWWSNPYPCLRRKLIASETKLGDVYSMMRSWYDWSVRPTYAPYEKTREQEKYIYGRVNLFDFVAEPGIKIIHWEYKLNHSTREITYAQGNPCDYYPEDDDVIVTKFDDVAYGQMINEMINGGWNQEQFKMHKILKSEGNVLTIDFEKDAKLTTNEGVTMPEYFNKWIIAPMFNAKLRIKHEEIAQRQSDDPMVKRTLSPIAADPIVLQRLTLARFYDIRPALIGQGLSRQQAQSTYDEEISKQAGYAEILKRRGIVQIPKKPCPTVTAQYTLELYSLSLINILQQHVARDCDEEAIYEHPKADYELEIFGESIVDISQVIVLVFDLIFERRRRVRDVYESRYIITRIRRMRGKERLNVIAEFFPTYGSLLNGLNSAYVVQDIMYLNFLPLYFLAGDNMIYSHRQWSIPLLLYTHEVMVIPLEVGSYNDRCGLIAYLEYMVFFPSKAIRLSKLNEAHAKIAREMLKYYANTTVYDGGDNSNVVTTKQLLYETYLASLCGGFLDGIVWYLPITHPKKCIVAIEVSDERVPASIRAGRIRLRFPLSSRHLKGSAIIQIDLVGRFTVYSEGIVSFLVCKKNLLKYKCEIILLKFSGHVFGNDEMLTKLLNV.

The protein belongs to the orbivirus VP2 family.

It localises to the virion. Functionally, the VP2 protein is one of the two proteins (with VP5) target of the host immunogenic response. Responsible for viral which constitute the virus particle outer capsid. It is the major attachment to target host cell, probably by binding to sialic acid. This attachment induces virion internalization predominantly through clathrin-dependent endocytosis. The protein is Outer capsid protein VP2 (Segment-2) of Bluetongue virus 1 (isolate South Africa) (BTV 1).